Here is a 116-residue protein sequence, read N- to C-terminus: MKQEILEVFDNTYPDRDYTIEIVNPEFTSVCPKTGLPDFGTITVSYIPDKTCIELKSLKYYFLEFRNAGIFYENVTNRILDDLVAVSSPRSMTVRTEWKARGGITETVTVSHNASA.

Cys31 (thioimide intermediate) is an active-site residue. The active-site Proton donor is Asp38. Substrate-binding positions include 53-55 and 72-73; these read IEL and YE.

Belongs to the GTP cyclohydrolase I family. QueF type 1 subfamily.

The protein resides in the cytoplasm. It carries out the reaction 7-aminomethyl-7-carbaguanine + 2 NADP(+) = 7-cyano-7-deazaguanine + 2 NADPH + 3 H(+). The protein operates within tRNA modification; tRNA-queuosine biosynthesis. Catalyzes the NADPH-dependent reduction of 7-cyano-7-deazaguanine (preQ0) to 7-aminomethyl-7-deazaguanine (preQ1). The polypeptide is NADPH-dependent 7-cyano-7-deazaguanine reductase (Chlorobium luteolum (strain DSM 273 / BCRC 81028 / 2530) (Pelodictyon luteolum)).